Here is a 382-residue protein sequence, read N- to C-terminus: MAYSAAMKAAIGEMRDVLKAHGLGQQSKEFSAHGEHKPHDDAPFVFVACSGGRDSLALAACAQVVCAAWGIRCGAIIVDHHLQDASHKVAQQTAQTCRDLGLEPVLIVDVQVKERGQGIEAAAREARYAALVGTARRWHATAVLLAHTKDDQAESILIDLIRAAGTDAFAGMPQTQLFDDVLVLRPLLGITRAQTTRICEDEGLEYWDDPTNGDAVPLETALPASYPLRSRVRHDLMPYLSAFAGCDMVDRLARTARIARRDVEALNQEAERALAQTVEFEGNMRDLQADRLADDKLGANIDARALERWPEAIRYRVIARTLAACGLAYASRHVAAVDKLVSQWHGQGKVALPSKYSAKRKAHVIRICEDITHANRRCAKRN.

Residue 50–55 (SGGRDS) coordinates ATP.

This sequence belongs to the tRNA(Ile)-lysidine synthase family.

It localises to the cytoplasm. The enzyme catalyses cytidine(34) in tRNA(Ile2) + L-lysine + ATP = lysidine(34) in tRNA(Ile2) + AMP + diphosphate + H(+). Its function is as follows. Ligates lysine onto the cytidine present at position 34 of the AUA codon-specific tRNA(Ile) that contains the anticodon CAU, in an ATP-dependent manner. Cytidine is converted to lysidine, thus changing the amino acid specificity of the tRNA from methionine to isoleucine. This is tRNA(Ile)-lysidine synthase from Bifidobacterium animalis subsp. lactis (strain AD011).